Here is a 476-residue protein sequence, read N- to C-terminus: Aspartyl/glutamyl-tRNA(Asn/Gln) amidotransferase subunit B (476 aa).

This sequence belongs to the GatB/GatE family. GatB subfamily. As to quaternary structure, heterotrimer of A, B and C subunits.

It catalyses the reaction L-glutamyl-tRNA(Gln) + L-glutamine + ATP + H2O = L-glutaminyl-tRNA(Gln) + L-glutamate + ADP + phosphate + H(+). The enzyme catalyses L-aspartyl-tRNA(Asn) + L-glutamine + ATP + H2O = L-asparaginyl-tRNA(Asn) + L-glutamate + ADP + phosphate + 2 H(+). In terms of biological role, allows the formation of correctly charged Asn-tRNA(Asn) or Gln-tRNA(Gln) through the transamidation of misacylated Asp-tRNA(Asn) or Glu-tRNA(Gln) in organisms which lack either or both of asparaginyl-tRNA or glutaminyl-tRNA synthetases. The reaction takes place in the presence of glutamine and ATP through an activated phospho-Asp-tRNA(Asn) or phospho-Glu-tRNA(Gln). In Vesicomyosocius okutanii subsp. Calyptogena okutanii (strain HA), this protein is Aspartyl/glutamyl-tRNA(Asn/Gln) amidotransferase subunit B.